The primary structure comprises 493 residues: Probable plastidic glucose transporter 2 (493 aa).

Positions 1 to 14 (MLGLQRETSSMYKR) are enriched in polar residues. Residues 1–24 (MLGLQRETSSMYKRTSSRDYSPMI) form a disordered region. Transmembrane regions (helical) follow at residues 52–72 (LPHV…LGVV), 94–114 (LVVS…GGVA), 128–148 (LPMI…VMLL), 151–171 (FLVG…VTEV), 182–202 (SFIQ…GIPV), 211–231 (VCFW…FLCA), 293–313 (VVFI…NAVF), 329–349 (LGNI…MVLM), 356–376 (LLLL…VGAT), 392–412 (GTLV…GLLL), 424–444 (AMAF…LLFL), and 450–470 (LGPR…VMFV).

This sequence belongs to the major facilitator superfamily. Sugar transporter (TC 2.A.1.1) family.

The protein resides in the plastid. It localises to the chloroplast membrane. Its function is as follows. May be involved in the efflux of glucose towards the cytosol. This chain is Probable plastidic glucose transporter 2, found in Arabidopsis thaliana (Mouse-ear cress).